We begin with the raw amino-acid sequence, 130 residues long: Abscisic acid and environmental stress-inducible protein TAS14 (130 aa).

Residues 1–130 (MAQYGNQDQM…KIKDKIPGMH (130 aa)) are disordered. The span at 27-58 (QGTGTGGMMGGTGTGGMMGGTGGEYGTQGMGT) shows a compositional bias: gly residues. Composition is skewed to basic and acidic residues over residues 61 to 73 (HHHE…RRSD) and 92 to 130 (KEKI…PGMH).

This sequence belongs to the plant dehydrin family.

This chain is Abscisic acid and environmental stress-inducible protein TAS14 (TAS14), found in Solanum lycopersicum (Tomato).